A 297-amino-acid chain; its full sequence is N-acetylmuramic acid 6-phosphate etherase (297 aa).

Residues 55-218 (AAAALKSGGR…STGAMVKFGK (164 aa)) form the SIS domain. E83 (proton donor) is an active-site residue. The active site involves E114.

This sequence belongs to the GCKR-like family. MurNAc-6-P etherase subfamily. As to quaternary structure, homodimer.

The catalysed reaction is N-acetyl-D-muramate 6-phosphate + H2O = N-acetyl-D-glucosamine 6-phosphate + (R)-lactate. It participates in amino-sugar metabolism; 1,6-anhydro-N-acetylmuramate degradation. It functions in the pathway amino-sugar metabolism; N-acetylmuramate degradation. The protein operates within cell wall biogenesis; peptidoglycan recycling. Functionally, specifically catalyzes the cleavage of the D-lactyl ether substituent of MurNAc 6-phosphate, producing GlcNAc 6-phosphate and D-lactate. Together with AnmK, is also required for the utilization of anhydro-N-acetylmuramic acid (anhMurNAc) either imported from the medium or derived from its own cell wall murein, and thus plays a role in cell wall recycling. The chain is N-acetylmuramic acid 6-phosphate etherase from Salmonella typhi.